The following is a 460-amino-acid chain: Probable glucan endo-1,3-beta-glucosidase eglC (460 aa).

Residues 1-18 (MQLAQLAAFAMTLATSEA) form the signal peptide. Glu128 acts as the Proton donor in catalysis. Asn183 carries an N-linked (GlcNAc...) asparagine glycan. The Nucleophile role is filled by Glu239. Asn312, Asn367, and Asn373 each carry an N-linked (GlcNAc...) asparagine glycan. The segment at 379 to 437 (RPSGSASARPSAGAISSGSGSSSSGSGSSGSTGTSATSGQSSSSGSSAAAGSSSPAAFS) is disordered. Over residues 380 to 437 (PSGSASARPSAGAISSGSGSSSSGSGSSGSTGTSATSGQSSSSGSSAAAGSSSPAAFS) the composition is skewed to low complexity. A lipid anchor (GPI-anchor amidated serine) is attached at Ser430. Positions 431–460 (SSPAAFSGASTLSGSLFGAVVAVFMTLAAL) are cleaved as a propeptide — removed in mature form.

Belongs to the glycosyl hydrolase 17 family. The GPI-anchor is attached to the protein in the endoplasmic reticulum and serves to target the protein to the cell surface. There, the glucosamine-inositol phospholipid moiety is cleaved off and the GPI-modified mannoprotein is covalently attached via its lipidless GPI glycan remnant to the 1,6-beta-glucan of the outer cell wall layer.

Its subcellular location is the cell membrane. It is found in the secreted. The protein localises to the cell wall. The enzyme catalyses Hydrolysis of (1-&gt;3)-beta-D-glucosidic linkages in (1-&gt;3)-beta-D-glucans.. Glucanases play a role in cell expansion during growth, in cell-cell fusion during mating, and in spore release during sporulation. This enzyme may be involved in beta-glucan degradation and also function biosynthetically as a transglycosylase. The protein is Probable glucan endo-1,3-beta-glucosidase eglC (eglC) of Aspergillus niger (strain ATCC MYA-4892 / CBS 513.88 / FGSC A1513).